A 32-amino-acid polypeptide reads, in one-letter code: Photosystem II reaction center protein T (32 aa).

The helical transmembrane segment at 3-23 (AFAYVLILTLAVVTLFFAVAF) threads the bilayer.

This sequence belongs to the PsbT family. In terms of assembly, PSII is composed of 1 copy each of membrane proteins PsbA, PsbB, PsbC, PsbD, PsbE, PsbF, PsbH, PsbI, PsbJ, PsbK, PsbL, PsbM, PsbT, PsbX, PsbY, Psb30/Ycf12, peripheral proteins PsbO, CyanoQ (PsbQ), PsbU, PsbV and a large number of cofactors. It forms dimeric complexes.

Its subcellular location is the cellular thylakoid membrane. Functionally, found at the monomer-monomer interface of the photosystem II (PS II) dimer, plays a role in assembly and dimerization of PSII. PSII is a light-driven water plastoquinone oxidoreductase, using light energy to abstract electrons from H(2)O, generating a proton gradient subsequently used for ATP formation. In Prochlorococcus marinus (strain MIT 9301), this protein is Photosystem II reaction center protein T.